The following is a 347-amino-acid chain: Protein RecA (347 aa).

Position 67 to 74 (67 to 74 (GPESSGKT)) interacts with ATP.

This sequence belongs to the RecA family.

It localises to the cytoplasm. Its function is as follows. Can catalyze the hydrolysis of ATP in the presence of single-stranded DNA, the ATP-dependent uptake of single-stranded DNA by duplex DNA, and the ATP-dependent hybridization of homologous single-stranded DNAs. It interacts with LexA causing its activation and leading to its autocatalytic cleavage. This chain is Protein RecA, found in Helicobacter pylori (strain G27).